A 195-amino-acid polypeptide reads, in one-letter code: Probable GTP-binding protein EngB (195 aa).

The EngB-type G domain maps to 24–195; that stretch reads DWPEIALAGR…EAWTAILKYL (172 aa). Residues 32-39, 59-63, 77-80, 144-147, and 176-178 contribute to the GTP site; these read GRSNVGKS, GKTQL, DVPG, TKAD, and FSS. Residues serine 39 and threonine 61 each contribute to the Mg(2+) site.

Belongs to the TRAFAC class TrmE-Era-EngA-EngB-Septin-like GTPase superfamily. EngB GTPase family. Mg(2+) serves as cofactor.

Functionally, necessary for normal cell division and for the maintenance of normal septation. This Lactococcus lactis subsp. cremoris (strain MG1363) protein is Probable GTP-binding protein EngB.